The sequence spans 250 residues: Tetrahydromethanopterin S-methyltransferase subunit D (250 aa).

The next 6 membrane-spanning stretches (helical) occupy residues 9-29 (IIWM…VHFV), 47-67 (GTVQ…GFMM), 86-106 (IMIA…VGVV), 144-164 (IIGG…LIEV), 184-204 (LVAV…VIPS), and 230-250 (LVAS…LGGI).

The protein belongs to the MtrD family. As to quaternary structure, the complex is composed of 8 subunits; MtrA, MtrB, MtrC, MtrD, MtrE, MtrF, MtrG and MtrH.

It is found in the cell membrane. The catalysed reaction is 5-methyl-5,6,7,8-tetrahydromethanopterin + coenzyme M + 2 Na(+)(in) = 5,6,7,8-tetrahydromethanopterin + methyl-coenzyme M + 2 Na(+)(out). It participates in one-carbon metabolism; methanogenesis from CO(2); methyl-coenzyme M from 5,10-methylene-5,6,7,8-tetrahydromethanopterin: step 2/2. Functionally, part of a complex that catalyzes the formation of methyl-coenzyme M and tetrahydromethanopterin from coenzyme M and methyl-tetrahydromethanopterin. This is an energy-conserving, sodium-ion translocating step. The chain is Tetrahydromethanopterin S-methyltransferase subunit D from Methanosarcina barkeri (strain Fusaro / DSM 804).